Consider the following 415-residue polypeptide: ATP-dependent RNA helicase RhlB (415 aa).

The short motif at 9–37 is the Q motif element; that stretch reads QRFSALPLHPIVRGALAKKGFDFCTPIQA. Residues 40-218 enclose the Helicase ATP-binding domain; that stretch reads LPISLNGRDV…FEDMNEPEYI (179 aa). 53–60 serves as a coordination point for ATP; the sequence is AQTGTGKT. Residues 164-167 carry the DEAD box motif; sequence DEAD. The Helicase C-terminal domain maps to 241–389; sequence DKMALLLTLM…VSQYETEALL (149 aa).

Belongs to the DEAD box helicase family. RhlB subfamily. Component of the RNA degradosome, which is a multiprotein complex involved in RNA processing and mRNA degradation.

It is found in the cytoplasm. The catalysed reaction is ATP + H2O = ADP + phosphate + H(+). In terms of biological role, DEAD-box RNA helicase involved in RNA degradation. Has RNA-dependent ATPase activity and unwinds double-stranded RNA. The chain is ATP-dependent RNA helicase RhlB from Haemophilus influenzae (strain ATCC 51907 / DSM 11121 / KW20 / Rd).